We begin with the raw amino-acid sequence, 1342 residues long: DNA-directed RNA polymerase subunit beta (1342 aa).

The protein belongs to the RNA polymerase beta chain family. In terms of assembly, the RNAP catalytic core consists of 2 alpha, 1 beta, 1 beta' and 1 omega subunit. When a sigma factor is associated with the core the holoenzyme is formed, which can initiate transcription.

The enzyme catalyses RNA(n) + a ribonucleoside 5'-triphosphate = RNA(n+1) + diphosphate. In terms of biological role, DNA-dependent RNA polymerase catalyzes the transcription of DNA into RNA using the four ribonucleoside triphosphates as substrates. In Klebsiella pneumoniae (strain 342), this protein is DNA-directed RNA polymerase subunit beta.